Here is a 111-residue protein sequence, read N- to C-terminus: Universal stress protein B (111 aa).

Helical transmembrane passes span 1 to 21 and 90 to 110; these read MIST…NMAR and FLLT…LMIW.

Belongs to the universal stress protein B family.

It is found in the cell inner membrane. The polypeptide is Universal stress protein B (Salmonella arizonae (strain ATCC BAA-731 / CDC346-86 / RSK2980)).